We begin with the raw amino-acid sequence, 282 residues long: Probable endonuclease 4 (282 aa).

Residues His-70, His-110, Glu-146, Asp-180, His-183, His-217, Asp-230, His-232, and Glu-262 each contribute to the Zn(2+) site.

The protein belongs to the AP endonuclease 2 family. Zn(2+) serves as cofactor.

The enzyme catalyses Endonucleolytic cleavage to 5'-phosphooligonucleotide end-products.. Its function is as follows. Endonuclease IV plays a role in DNA repair. It cleaves phosphodiester bonds at apurinic or apyrimidinic (AP) sites, generating a 3'-hydroxyl group and a 5'-terminal sugar phosphate. This Wolinella succinogenes (strain ATCC 29543 / DSM 1740 / CCUG 13145 / JCM 31913 / LMG 7466 / NCTC 11488 / FDC 602W) (Vibrio succinogenes) protein is Probable endonuclease 4.